Consider the following 1390-residue polypeptide: DNA-directed RNA polymerase subunit beta'' (1390 aa).

Zn(2+) is bound by residues C224, C294, C301, and C304.

This sequence belongs to the RNA polymerase beta' chain family. RpoC2 subfamily. In terms of assembly, in plastids the minimal PEP RNA polymerase catalytic core is composed of four subunits: alpha, beta, beta', and beta''. When a (nuclear-encoded) sigma factor is associated with the core the holoenzyme is formed, which can initiate transcription. Zn(2+) serves as cofactor.

The protein resides in the plastid. The protein localises to the chloroplast. The catalysed reaction is RNA(n) + a ribonucleoside 5'-triphosphate = RNA(n+1) + diphosphate. Its function is as follows. DNA-dependent RNA polymerase catalyzes the transcription of DNA into RNA using the four ribonucleoside triphosphates as substrates. This is DNA-directed RNA polymerase subunit beta'' from Ceratophyllum demersum (Rigid hornwort).